Consider the following 224-residue polypeptide: Holliday junction branch migration complex subunit RuvA (224 aa).

Residues 1–67 (MISWLKGEKV…EDGTSLYGFI (67 aa)) form a domain I region. A domain II region spans residues 68-146 (EVNQRDLFRE…RFTDNDKTIH (79 aa)). Residues 147-155 (ENKKGIEAN) form a flexible linker region. The domain III stretch occupies residues 156 to 224 (QFSKYIDEIY…ILMKLSEKTT (69 aa)).

This sequence belongs to the RuvA family. Homotetramer. Forms an RuvA(8)-RuvB(12)-Holliday junction (HJ) complex. HJ DNA is sandwiched between 2 RuvA tetramers; dsDNA enters through RuvA and exits via RuvB. An RuvB hexamer assembles on each DNA strand where it exits the tetramer. Each RuvB hexamer is contacted by two RuvA subunits (via domain III) on 2 adjacent RuvB subunits; this complex drives branch migration. In the full resolvosome a probable DNA-RuvA(4)-RuvB(12)-RuvC(2) complex forms which resolves the HJ.

It localises to the cytoplasm. In terms of biological role, the RuvA-RuvB-RuvC complex processes Holliday junction (HJ) DNA during genetic recombination and DNA repair, while the RuvA-RuvB complex plays an important role in the rescue of blocked DNA replication forks via replication fork reversal (RFR). RuvA specifically binds to HJ cruciform DNA, conferring on it an open structure. The RuvB hexamer acts as an ATP-dependent pump, pulling dsDNA into and through the RuvAB complex. HJ branch migration allows RuvC to scan DNA until it finds its consensus sequence, where it cleaves and resolves the cruciform DNA. This Prochlorococcus marinus (strain NATL1A) protein is Holliday junction branch migration complex subunit RuvA.